The sequence spans 307 residues: Elongation factor Ts (307 aa).

An involved in Mg(2+) ion dislocation from EF-Tu region spans residues Thr80–Val83.

This sequence belongs to the EF-Ts family.

Its subcellular location is the cytoplasm. Functionally, associates with the EF-Tu.GDP complex and induces the exchange of GDP to GTP. It remains bound to the aminoacyl-tRNA.EF-Tu.GTP complex up to the GTP hydrolysis stage on the ribosome. The protein is Elongation factor Ts of Clostridium botulinum (strain 657 / Type Ba4).